A 348-amino-acid polypeptide reads, in one-letter code: tRNA N6-adenosine threonylcarbamoyltransferase (348 aa).

H114 and H118 together coordinate Fe cation. Residues 137–141 (LVSGG), D171, G184, D188, and N283 contribute to the substrate site. D311 contributes to the Fe cation binding site.

Belongs to the KAE1 / TsaD family. Fe(2+) is required as a cofactor.

The protein localises to the cytoplasm. The catalysed reaction is L-threonylcarbamoyladenylate + adenosine(37) in tRNA = N(6)-L-threonylcarbamoyladenosine(37) in tRNA + AMP + H(+). Its function is as follows. Required for the formation of a threonylcarbamoyl group on adenosine at position 37 (t(6)A37) in tRNAs that read codons beginning with adenine. Is involved in the transfer of the threonylcarbamoyl moiety of threonylcarbamoyl-AMP (TC-AMP) to the N6 group of A37, together with TsaE and TsaB. TsaD likely plays a direct catalytic role in this reaction. The chain is tRNA N6-adenosine threonylcarbamoyltransferase from Nocardioides sp. (strain ATCC BAA-499 / JS614).